Here is a 447-residue protein sequence, read N- to C-terminus: Tol-Pal system protein TolB (447 aa).

The signal sequence occupies residues 1–29 (MITMSRIRSLAAFAVFVILGVAAVLPAQA).

It belongs to the TolB family. As to quaternary structure, the Tol-Pal system is composed of five core proteins: the inner membrane proteins TolA, TolQ and TolR, the periplasmic protein TolB and the outer membrane protein Pal. They form a network linking the inner and outer membranes and the peptidoglycan layer.

It localises to the periplasm. In terms of biological role, part of the Tol-Pal system, which plays a role in outer membrane invagination during cell division and is important for maintaining outer membrane integrity. The polypeptide is Tol-Pal system protein TolB (Paramagnetospirillum magneticum (strain ATCC 700264 / AMB-1) (Magnetospirillum magneticum)).